A 340-amino-acid chain; its full sequence is UDP-3-O-(3-hydroxymyristoyl)glucosamine N-acyltransferase (340 aa).

Catalysis depends on H239, which acts as the Proton acceptor.

This sequence belongs to the transferase hexapeptide repeat family. LpxD subfamily. As to quaternary structure, homotrimer.

The enzyme catalyses a UDP-3-O-[(3R)-3-hydroxyacyl]-alpha-D-glucosamine + a (3R)-hydroxyacyl-[ACP] = a UDP-2-N,3-O-bis[(3R)-3-hydroxyacyl]-alpha-D-glucosamine + holo-[ACP] + H(+). It catalyses the reaction UDP-3-O-[(3R)-3-hydroxytetradecanoyl]-alpha-D-glucosamine + (3R)-hydroxytetradecanoyl-[ACP] = UDP-2-N,3-O-bis[(3R)-3-hydroxytetradecanoyl]-alpha-D-glucosamine + holo-[ACP] + H(+). Its pathway is glycolipid biosynthesis; lipid IV(A) biosynthesis; lipid IV(A) from (3R)-3-hydroxytetradecanoyl-[acyl-carrier-protein] and UDP-N-acetyl-alpha-D-glucosamine: step 3/6. In terms of biological role, catalyzes the N-acylation of UDP-3-O-(hydroxytetradecanoyl)glucosamine using 3-hydroxytetradecanoyl-ACP as the acyl donor. Is involved in the biosynthesis of lipid A, a phosphorylated glycolipid that anchors the lipopolysaccharide to the outer membrane of the cell. The protein is UDP-3-O-(3-hydroxymyristoyl)glucosamine N-acyltransferase of Yersinia pestis bv. Antiqua (strain Antiqua).